Here is a 280-residue protein sequence, read N- to C-terminus: Ribonuclease Z (280 aa).

His61, His63, Asp65, His66, His153, Asp176, and His240 together coordinate Zn(2+). The active-site Proton acceptor is the Asp65.

Belongs to the RNase Z family. In terms of assembly, homodimer. Requires Zn(2+) as cofactor.

It carries out the reaction Endonucleolytic cleavage of RNA, removing extra 3' nucleotides from tRNA precursor, generating 3' termini of tRNAs. A 3'-hydroxy group is left at the tRNA terminus and a 5'-phosphoryl group is left at the trailer molecule.. Its function is as follows. Zinc phosphodiesterase, which displays some tRNA 3'-processing endonuclease activity. Probably involved in tRNA maturation, by removing a 3'-trailer from precursor tRNA. This is Ribonuclease Z from Mycolicibacterium paratuberculosis (strain ATCC BAA-968 / K-10) (Mycobacterium paratuberculosis).